A 331-amino-acid polypeptide reads, in one-letter code: WW domain-containing protein C2F3.14c (331 aa).

Residues 1-184 are disordered; it reads MSSSKDCKAT…TNENQAQPSI (184 aa). The segment covering 9 to 22 has biased composition (polar residues); it reads ATSNVDQTIPASNV. Positions 23–41 are enriched in low complexity; the sequence is NSGDFISSNTSSSNSENSN. Polar residues predominate over residues 57 to 89; it reads SFISENTPKNTFESTQTYENLESISKNEPTSEA. A compositionally biased stretch (pro residues) spans 105–145; the sequence is REPPLPNEPVPEEPLPGEPPLPDEPVPEEPLPGEPPLPNEP. The span at 158 to 184 shows a compositional bias: polar residues; the sequence is SDETVSETSKNDTSNSPTNENQAQPSI. The 34-residue stretch at 187–220 folds into the WW domain; the sequence is SEGHRIAAIWDPSQQAYYFWDTLTNTTSWNNPLE. Residues 290–309 are disordered; the sequence is YTRKEMEQMKRRTKEKKEMK. Over residues 292–309 the composition is skewed to basic and acidic residues; sequence RKEMEQMKRRTKEKKEMK.

It localises to the nucleus. The chain is WW domain-containing protein C2F3.14c from Schizosaccharomyces pombe (strain 972 / ATCC 24843) (Fission yeast).